Reading from the N-terminus, the 229-residue chain is Large ribosomal subunit protein uL1 (229 aa).

It belongs to the universal ribosomal protein uL1 family. As to quaternary structure, part of the 50S ribosomal subunit.

Its function is as follows. Binds directly to 23S rRNA. The L1 stalk is quite mobile in the ribosome, and is involved in E site tRNA release. In terms of biological role, protein L1 is also a translational repressor protein, it controls the translation of the L11 operon by binding to its mRNA. The polypeptide is Large ribosomal subunit protein uL1 (Clostridium botulinum (strain 657 / Type Ba4)).